The sequence spans 725 residues: Eukaryotic translation initiation factor 3 subunit B (725 aa).

At S23 the chain carries Phosphoserine. One can recognise an RRM domain in the interval 39 to 129 (TVVVIEGAPV…HTFVVRKLNQ (91 aa)). Residue S135 is modified to Phosphoserine. T136 bears the Phosphothreonine mark. WD repeat units lie at residues 190-229 (DREN…MCAR), 304-344 (DGKK…LVDK), and 347-386 (IKID…QPAR). The stretch at 630-671 (LTKEDMKKIRKKLKDYNRLFDEEDIAEQSSANRELAARRRQL) forms a coiled coil.

Belongs to the eIF-3 subunit B family. Component of the eukaryotic translation initiation factor 3 (eIF-3) complex. The eIF-3 complex appears to include tif32/eif3a, SPAC25G10.08/eif3b, tif33/eif3c, SPBC4C3.07/eif3f, tif35/eif3g and sum1/eif3i. This set of common subunits may also associate exclusively with either moe1/eif3d and int6/eif3e, or with SPAC821.05/eif3h and SPAC1751.03/eif3m. The eIF-3 complex may also include SPAC3A12.13c/eif3j.

Its subcellular location is the cytoplasm. In terms of biological role, RNA-binding component of the eukaryotic translation initiation factor 3 (eIF-3) complex, which is involved in protein synthesis of a specialized repertoire of mRNAs and, together with other initiation factors, stimulates binding of mRNA and methionyl-tRNAi to the 40S ribosome. The eIF-3 complex specifically targets and initiates translation of a subset of mRNAs involved in cell proliferation. The polypeptide is Eukaryotic translation initiation factor 3 subunit B (Schizosaccharomyces pombe (strain 972 / ATCC 24843) (Fission yeast)).